Here is a 60-residue protein sequence, read N- to C-terminus: Antimicrobial peptide Eval151 (60 aa).

The first 23 residues, 1–23 (MKVLPVLFLTLLVLISIPAETFC), serve as a signal peptide directing secretion. The residue at position 36 (Arg36) is an Arginine amide. Positions 36–54 (RGKRNDFFRSDVSRDDESH) are enriched in basic and acidic residues. Residues 36–60 (RGKRNDFFRSDVSRDDESHPSPGQK) are disordered. Positions 37 to 60 (GKRNDFFRSDVSRDDESHPSPGQK) are excised as a propeptide.

Belongs to the non-disulfide-bridged peptide (NDBP) superfamily. In terms of tissue distribution, expressed by the venom gland.

Its subcellular location is the secreted. In terms of biological role, probable antimicrobial peptide. Has no inhibitory activity against herpes simplex virus type 1 (HSV-1). The chain is Antimicrobial peptide Eval151 from Euscorpiops validus (Scorpion).